The primary structure comprises 128 residues: Calcitonin gene-related peptide 1 (128 aa).

An N-terminal signal peptide occupies residues 1–25; that stretch reads MGFQKFSPFLALSILVLLQAGSLHA. Positions 26 to 80 are excised as a propeptide; the sequence is APFRSALESSPADPATLSEDEARLLLAALVQDYVQMKASELEQEQEREGSRIIAQ. Cys-84 and Cys-89 are oxidised to a cystine. Position 119 is a phenylalanine amide (Phe-119). A propeptide spanning residues 125-128 is cleaved from the precursor; it reads DLQA.

It belongs to the calcitonin family. In terms of tissue distribution, expressed in spinal cord.

The protein localises to the secreted. In terms of biological role, CGRP1/CALCA is a peptide hormone that induces vasodilation mediated by the CALCRL-RAMP1 receptor complex. Dilates a variety of vessels including the coronary, cerebral and systemic vasculature. Its abundance in the CNS also points toward a neurotransmitter or neuromodulator role. It also elevates platelet cAMP. CGRP1 can also bind and activate CALCR-RAMP1 (AMYR1) receptor complex. This Homo sapiens (Human) protein is Calcitonin gene-related peptide 1.